The primary structure comprises 372 residues: tRNA-specific 2-thiouridylase MnmA (372 aa).

Residues 16–23 (GMSGGVDS) and Met-42 contribute to the ATP site. The tract at residues 102-104 (NPD) is interaction with target base in tRNA. The Nucleophile role is filled by Cys-107. An intrachain disulfide couples Cys-107 to Cys-205. An ATP-binding site is contributed by Gly-132. The interval 155–157 (KDQ) is interaction with tRNA. The Cysteine persulfide intermediate role is filled by Cys-205. The interval 317 to 318 (RY) is interaction with tRNA.

Belongs to the MnmA/TRMU family.

Its subcellular location is the cytoplasm. It catalyses the reaction S-sulfanyl-L-cysteinyl-[protein] + uridine(34) in tRNA + AH2 + ATP = 2-thiouridine(34) in tRNA + L-cysteinyl-[protein] + A + AMP + diphosphate + H(+). Catalyzes the 2-thiolation of uridine at the wobble position (U34) of tRNA, leading to the formation of s(2)U34. This Shewanella baltica (strain OS185) protein is tRNA-specific 2-thiouridylase MnmA.